The sequence spans 312 residues: Acetyl-coenzyme A carboxylase carboxyl transferase subunit alpha (312 aa).

The 251-residue stretch at 36–286 (RLDKEVKSIY…KEYFLDALRT (251 aa)) folds into the CoA carboxyltransferase C-terminal domain.

This sequence belongs to the AccA family. Acetyl-CoA carboxylase is a heterohexamer composed of biotin carboxyl carrier protein (AccB), biotin carboxylase (AccC) and two subunits each of ACCase subunit alpha (AccA) and ACCase subunit beta (AccD).

The protein resides in the cytoplasm. It catalyses the reaction N(6)-carboxybiotinyl-L-lysyl-[protein] + acetyl-CoA = N(6)-biotinyl-L-lysyl-[protein] + malonyl-CoA. It participates in lipid metabolism; malonyl-CoA biosynthesis; malonyl-CoA from acetyl-CoA: step 1/1. In terms of biological role, component of the acetyl coenzyme A carboxylase (ACC) complex. First, biotin carboxylase catalyzes the carboxylation of biotin on its carrier protein (BCCP) and then the CO(2) group is transferred by the carboxyltransferase to acetyl-CoA to form malonyl-CoA. The chain is Acetyl-coenzyme A carboxylase carboxyl transferase subunit alpha from Helicobacter pylori (strain ATCC 700392 / 26695) (Campylobacter pylori).